The following is a 1317-amino-acid chain: uncharacterized protein (1317 aa).

This sequence belongs to the oxoprolinase family.

This is an uncharacterized protein from Schizosaccharomyces pombe (strain 972 / ATCC 24843) (Fission yeast).